A 609-amino-acid chain; its full sequence is Aminopeptidase ltah-1.1 (609 aa).

Residues 137–139 and 268–273 each bind substrate; these read QCQ and PFGGME. Zn(2+) is bound at residue His-297. Residue Glu-298 is the Proton acceptor of the active site. 2 residues coordinate Zn(2+): His-301 and Glu-320. The Proton donor role is filled by Tyr-387. 564-566 is a substrate binding site; it reads RMK.

Belongs to the peptidase M1 family. Requires Zn(2+) as cofactor.

Its subcellular location is the cytoplasm. It catalyses the reaction Release of N-terminal Arg and Lys from oligopeptides when P1' is not Pro. Also acts on arylamides of Arg and Lys.. Aminopeptidase which preferentially removes N-terminal Arg and Lys residues from peptides and proteins. In Caenorhabditis elegans, this protein is Aminopeptidase ltah-1.1.